Consider the following 190-residue polypeptide: Cancer-related nucleoside-triphosphatase (190 aa).

N-acetylalanine is present on Ala2. ATP contacts are provided by residues 9–16 (GPPGVGKT) and 109–116 (VCVIDEIG). Position 165 is an N6-acetyllysine (Lys165).

It belongs to the THEP1 NTPase family. In terms of assembly, monomer.

It carries out the reaction a ribonucleoside 5'-triphosphate + H2O = a ribonucleoside 5'-diphosphate + phosphate + H(+). It catalyses the reaction 5-methyl-UTP + H2O = 5-methyl-UDP + phosphate + H(+). The catalysed reaction is CTP + H2O = CDP + phosphate + H(+). The enzyme catalyses ATP + H2O = ADP + phosphate + H(+). It carries out the reaction GTP + H2O = GDP + phosphate + H(+). In terms of biological role, has nucleotide phosphatase activity towards ATP, GTP, CTP, TTP and UTP. Hydrolyzes nucleoside diphosphates with lower efficiency. The sequence is that of Cancer-related nucleoside-triphosphatase from Homo sapiens (Human).